Consider the following 424-residue polypeptide: Lactate racemase (424 aa).

72–75 (DHTR) provides a ligand contact to Ni(II)-pyridinium-3,5-bisthiocarboxylate mononucleotide. Catalysis depends on proton donor/acceptor residues His-108 and His-174. Ni(II)-pyridinium-3,5-bisthiocarboxylate mononucleotide is bound by residues Lys-184 and His-200. The substrate site is built by Gln-295 and Lys-298.

It belongs to the lactate racemase family. As to quaternary structure, homodimer. Ni(II)-pyridinium-3,5-bisthiocarboxylate mononucleotide serves as cofactor.

It catalyses the reaction (S)-lactate = (R)-lactate. With respect to regulation, activation of the apo-enzyme requires the three accessory proteins LarB, LarE and LarC, that are involved in the biosynthesis of the nickel-pincer cofactor of LarA. Inhibited by sulfite that behaves as a mixed inhibitor. Catalyzes the interconversion between the D- and L-isomers of lactate. May act as a rescue enzyme to ensure D-lactate production in physiological conditions where its production by the D-lactate dehydrogenase LdhD is not sufficient. D-Lactate is absolutely required for growth of L.plantarum and is an essential component of the cell wall peptidoglycan in this species, where it is incorporated as the last residue of the muramoyl-pentadepsipeptide peptidoglycan precursor; its incorporation confers high level of vancomycin resistance. The chain is Lactate racemase from Lactiplantibacillus plantarum (strain ATCC BAA-793 / NCIMB 8826 / WCFS1) (Lactobacillus plantarum).